A 493-amino-acid chain; its full sequence is V-type proton ATPase subunit B (493 aa).

It belongs to the ATPase alpha/beta chains family. As to quaternary structure, V-ATPase is a heteromultimeric enzyme composed of a peripheral catalytic V1 complex (main components: subunits A, B, C, D, E, and F) attached to an integral membrane V0 proton pore complex (main component: the proteolipid protein).

Its subcellular location is the cytoplasmic vesicle membrane. The protein localises to the endosome membrane. It localises to the contractile vacuole membrane. Its function is as follows. Vacuolar ATPase is responsible for acidifying a variety of intracellular compartments in eukaryotic cells. The B subunit is non-catalytic but combines with other subunits to form the catalytic complex. V-ATPase is responsible for energizing electrophoretic K(+)/2H(+) antiport by generating a transmembrane voltage of more than 200 mV. This Dictyostelium discoideum (Social amoeba) protein is V-type proton ATPase subunit B (vatB).